We begin with the raw amino-acid sequence, 381 residues long: 4-hydroxy-3-methylbut-2-en-1-yl diphosphate synthase (flavodoxin) (381 aa).

Positions 280, 283, 315, and 322 each coordinate [4Fe-4S] cluster.

This sequence belongs to the IspG family. [4Fe-4S] cluster is required as a cofactor.

The catalysed reaction is (2E)-4-hydroxy-3-methylbut-2-enyl diphosphate + oxidized [flavodoxin] + H2O + 2 H(+) = 2-C-methyl-D-erythritol 2,4-cyclic diphosphate + reduced [flavodoxin]. It participates in isoprenoid biosynthesis; isopentenyl diphosphate biosynthesis via DXP pathway; isopentenyl diphosphate from 1-deoxy-D-xylulose 5-phosphate: step 5/6. Converts 2C-methyl-D-erythritol 2,4-cyclodiphosphate (ME-2,4cPP) into 1-hydroxy-2-methyl-2-(E)-butenyl 4-diphosphate. The polypeptide is 4-hydroxy-3-methylbut-2-en-1-yl diphosphate synthase (flavodoxin) (Clavibacter sepedonicus (Clavibacter michiganensis subsp. sepedonicus)).